Consider the following 276-residue polypeptide: Octanoyltransferase LipM (276 aa).

One can recognise a BPL/LPL catalytic domain in the interval 31 to 246 (GLIPPVIRFY…GFAKSLQIEL (216 aa)). Catalysis depends on cysteine 148, which acts as the Acyl-thioester intermediate.

The protein belongs to the octanoyltransferase LipM family. As to quaternary structure, monomer.

The catalysed reaction is octanoyl-[ACP] + L-lysyl-[protein] = N(6)-octanoyl-L-lysyl-[protein] + holo-[ACP] + H(+). It functions in the pathway protein modification; protein lipoylation via endogenous pathway; protein N(6)-(lipoyl)lysine from octanoyl-[acyl-carrier-protein]. Its function is as follows. Catalyzes the transfer of endogenously produced octanoic acid from octanoyl-acyl-carrier-protein onto the lipoyl domain of GcvH, an intermediate carrier during protein lipoylation. This is Octanoyltransferase LipM from Lysinibacillus sphaericus (strain C3-41).